We begin with the raw amino-acid sequence, 607 residues long: Dolichyl-diphosphooligosaccharide--protein glycosyltransferase subunit 1 (607 aa).

A signal peptide spans 1–23; that stretch reads MEAPAAGLFLLLLLGTWAPAPGS. Topologically, residues 24-438 are lumenal; that stretch reads ASSEAPPLIN…TFNKVLMLQE (415 aa). Lys187 bears the N6-acetyllysine mark. Asn299 is a glycosylation site (N-linked (GlcNAc...) asparagine). Residues 439 to 457 traverse the membrane as a helical segment; sequence PLLVVAAFYILFFTVIIYV. Topologically, residues 458–607 are cytoplasmic; that stretch reads RLDFSITKDP…TKIDHILDAL (150 aa). Lys538 carries the post-translational modification N6-acetyllysine; alternate. Lys538 is covalently cross-linked (Glycyl lysine isopeptide (Lys-Gly) (interchain with G-Cter in SUMO2); alternate).

This sequence belongs to the OST1 family. Component of the oligosaccharyltransferase (OST) complex. OST exists in two different complex forms which contain common core subunits RPN1, RPN2, OST48, OST4, DAD1 and TMEM258, either STT3A or STT3B as catalytic subunits, and form-specific accessory subunits. STT3A complex assembly occurs through the formation of 3 subcomplexes. Subcomplex 1 contains RPN1 and TMEM258, subcomplex 2 contains the STT3A-specific subunits STT3A, DC2/OSTC, and KCP2 as well as the core subunit OST4, and subcomplex 3 contains RPN2, DAD1, and OST48. The STT3A complex can form stable complexes with the Sec61 complex or with both the Sec61 and TRAP complexes. Interacts with TMEM35A/NACHO. Ubiquitinated by the ECS(ASB11) complex. Ubiquitinated by RNF128, leading to degradation in a proteasome/lysosome-dependent manner. In terms of processing, ufmylated by UFL1 in response to endoplasmic reticulum stress, promoting reticulophagy of endoplasmic reticulum sheets. Expressed in all tissues tested.

Its subcellular location is the endoplasmic reticulum membrane. The protein resides in the melanosome. It functions in the pathway protein modification; protein glycosylation. In terms of biological role, subunit of the oligosaccharyl transferase (OST) complex that catalyzes the initial transfer of a defined glycan (Glc(3)Man(9)GlcNAc(2) in eukaryotes) from the lipid carrier dolichol-pyrophosphate to an asparagine residue within an Asn-X-Ser/Thr consensus motif in nascent polypeptide chains, the first step in protein N-glycosylation. N-glycosylation occurs cotranslationally and the complex associates with the Sec61 complex at the channel-forming translocon complex that mediates protein translocation across the endoplasmic reticulum (ER). All subunits are required for a maximal enzyme activity. The polypeptide is Dolichyl-diphosphooligosaccharide--protein glycosyltransferase subunit 1 (Homo sapiens (Human)).